The following is a 160-amino-acid chain: Ribosomal RNA large subunit methyltransferase H (160 aa).

Residues leucine 76, glycine 108, and 127 to 132 (LGKMTW) contribute to the S-adenosyl-L-methionine site.

The protein belongs to the RNA methyltransferase RlmH family. Homodimer.

It localises to the cytoplasm. The enzyme catalyses pseudouridine(1915) in 23S rRNA + S-adenosyl-L-methionine = N(3)-methylpseudouridine(1915) in 23S rRNA + S-adenosyl-L-homocysteine + H(+). Specifically methylates the pseudouridine at position 1915 (m3Psi1915) in 23S rRNA. In Rhizobium etli (strain CIAT 652), this protein is Ribosomal RNA large subunit methyltransferase H.